The primary structure comprises 156 residues: Small ribosomal subunit protein uS7 (156 aa).

It belongs to the universal ribosomal protein uS7 family. In terms of assembly, part of the 30S ribosomal subunit. Contacts proteins S9 and S11.

One of the primary rRNA binding proteins, it binds directly to 16S rRNA where it nucleates assembly of the head domain of the 30S subunit. Is located at the subunit interface close to the decoding center, probably blocks exit of the E-site tRNA. In Rubrobacter xylanophilus (strain DSM 9941 / JCM 11954 / NBRC 16129 / PRD-1), this protein is Small ribosomal subunit protein uS7.